Consider the following 541-residue polypeptide: Peptidyl-prolyl isomerase cwc-27 (541 aa).

In terms of domain architecture, PPIase cyclophilin-type spans proline 11–isoleucine 193. 2 disordered regions span residues aspartate 199–aspartate 443 and threonine 513–histidine 541. Basic and acidic residues-rich tracts occupy residues alanine 279–arginine 307, glutamine 316–glutamate 348, and isoleucine 361–alanine 374. The span at aspartate 432 to alanine 442 shows a compositional bias: acidic residues. Composition is skewed to basic and acidic residues over residues threonine 513–lysine 525 and alanine 532–histidine 541.

Belongs to the cyclophilin-type PPIase family. CWC27 subfamily. Associated with the spliceosome.

It is found in the cytoplasm. Its subcellular location is the nucleus. The enzyme catalyses [protein]-peptidylproline (omega=180) = [protein]-peptidylproline (omega=0). In terms of biological role, PPIases accelerate the folding of proteins. It catalyzes the cis-trans isomerization of proline imidic peptide bonds in oligopeptides. Involved in pre-mRNA splicing. This chain is Peptidyl-prolyl isomerase cwc-27 (cwc-27), found in Neurospora crassa (strain ATCC 24698 / 74-OR23-1A / CBS 708.71 / DSM 1257 / FGSC 987).